The chain runs to 540 residues: MAAKIIKFKEDARQKILKGVRTLADAVKVTLGPKGRNVVIDKSYGTPHITKDGVTVAKEIELEDKFENMGAQMVKEVASKTADKAGDGTTTATVLAEAIYSEGLRNVAAGANPLDLKRGMEKAVKVIVQELKKRSKTVDDRNEIAQVATISANNDAEIGEMIAQAIEKVGRDGTITVEEGKGFETELDVVKGMKFDRGYLSAYFMTNSESQECILEDAYVLIYEKKISAIKEIIPLLQAVVETGRPLLIIAEDVEGEALATLVVNRLRAGLKVCAVKAPGFGDRRKAMLQDIAILTGGELISEEIGLKLETTTIEQLGRVKKAVLTKDETTLVEGAGTKAAILDRASQIKRQIEESTSDYDKEKLQERLAKLVGGVAVIHVGAATEIEMKEKKDRVDDAQRATAAAVEEGILPGGGTAFIRCIPAVNSLADSLEGDEKTGAKIMARSLSAPLRQIAENAGQEGAIILQAVEKMKEKEGYNALTGEYVDMITAGILDPTKVVRCALENAVSVAAMLLTTEAIVADIPEEKPAPAAPVGMDY.

ATP-binding positions include 30–33, Lys51, 87–91, Gly415, 480–482, and Asp496; these read TLGP, DGTTT, and NAL.

Belongs to the chaperonin (HSP60) family. In terms of assembly, forms a cylinder of 14 subunits composed of two heptameric rings stacked back-to-back. Interacts with the co-chaperonin GroES.

The protein localises to the cytoplasm. The enzyme catalyses ATP + H2O + a folded polypeptide = ADP + phosphate + an unfolded polypeptide.. Functionally, together with its co-chaperonin GroES, plays an essential role in assisting protein folding. The GroEL-GroES system forms a nano-cage that allows encapsulation of the non-native substrate proteins and provides a physical environment optimized to promote and accelerate protein folding. The protein is Chaperonin GroEL 2 of Protochlamydia amoebophila (strain UWE25).